Consider the following 220-residue polypeptide: Deoxyribose-phosphate aldolase (220 aa).

The active-site Proton donor/acceptor is D89. Catalysis depends on K151, which acts as the Schiff-base intermediate with acetaldehyde. The active-site Proton donor/acceptor is K180.

This sequence belongs to the DeoC/FbaB aldolase family. DeoC type 1 subfamily.

The protein localises to the cytoplasm. It carries out the reaction 2-deoxy-D-ribose 5-phosphate = D-glyceraldehyde 3-phosphate + acetaldehyde. It functions in the pathway carbohydrate degradation; 2-deoxy-D-ribose 1-phosphate degradation; D-glyceraldehyde 3-phosphate and acetaldehyde from 2-deoxy-alpha-D-ribose 1-phosphate: step 2/2. Catalyzes a reversible aldol reaction between acetaldehyde and D-glyceraldehyde 3-phosphate to generate 2-deoxy-D-ribose 5-phosphate. The sequence is that of Deoxyribose-phosphate aldolase from Streptococcus gordonii (strain Challis / ATCC 35105 / BCRC 15272 / CH1 / DL1 / V288).